We begin with the raw amino-acid sequence, 200 residues long: NAD(P)H dehydrogenase (quinone) (200 aa).

The Flavodoxin-like domain occupies 4–191 (VLVLYYSMYG…DIARFQGKHV (188 aa)). FMN-binding positions include 10–15 (SMYGHI) and 79–81 (TRF). NAD(+) is bound at residue Tyr-12. Residue Trp-99 participates in substrate binding. FMN-binding positions include 114-120 (STGTQHG) and His-135.

It belongs to the WrbA family. It depends on FMN as a cofactor.

It carries out the reaction a quinone + NADH + H(+) = a quinol + NAD(+). The enzyme catalyses a quinone + NADPH + H(+) = a quinol + NADP(+). The polypeptide is NAD(P)H dehydrogenase (quinone) (Paraburkholderia phytofirmans (strain DSM 17436 / LMG 22146 / PsJN) (Burkholderia phytofirmans)).